A 349-amino-acid chain; its full sequence is MSLNTDLTIALDVMGGDQGPLITISSAITAISHQPNLHLILCGDEIIITETLAHFEITKENLATHKQLSIFPTSQVVLMSDKPIVALRTKKDSSMRKALDLVHEGRAQACVSAGNTGALFSMAHFVLKNIPGVERPALISSLPTHDKDKHVFMLDLGANVFCDSHVLYQFGVMGSVMAEQVDGINKPRVALLNMGEEAIKGSDHIKLAALELTENKDINYVGFIEGSDIFSNKADVIVCDGFVGNVALKTCEGVARLVYEKSKTAFSASLVAKLFGSLLKPSFKKLFKTMNPDQYNGASLIGLRGIVVKSHGNANSSAFLSAIEEAVKEVERQVPEKIKTSLEHGFTCR.

It belongs to the PlsX family. Homodimer. Probably interacts with PlsY.

It localises to the cytoplasm. The enzyme catalyses a fatty acyl-[ACP] + phosphate = an acyl phosphate + holo-[ACP]. It functions in the pathway lipid metabolism; phospholipid metabolism. Functionally, catalyzes the reversible formation of acyl-phosphate (acyl-PO(4)) from acyl-[acyl-carrier-protein] (acyl-ACP). This enzyme utilizes acyl-ACP as fatty acyl donor, but not acyl-CoA. This Colwellia psychrerythraea (strain 34H / ATCC BAA-681) (Vibrio psychroerythus) protein is Phosphate acyltransferase.